A 274-amino-acid chain; its full sequence is Nitrogenase iron protein (274 aa).

Position 8–15 (8–15 (GKGGIGKS)) interacts with ATP. Residue Cys-94 participates in [4Fe-4S] cluster binding. At Arg-97 the chain carries ADP-ribosylarginine; by dinitrogenase reductase ADP-ribosyltransferase. Cys-131 contacts [4Fe-4S] cluster.

Belongs to the NifH/BchL/ChlL family. Homodimer. [4Fe-4S] cluster is required as a cofactor. In terms of processing, the reversible ADP-ribosylation of Arg-97 inactivates the nitrogenase reductase and regulates nitrogenase activity.

The catalysed reaction is N2 + 8 reduced [2Fe-2S]-[ferredoxin] + 16 ATP + 16 H2O = H2 + 8 oxidized [2Fe-2S]-[ferredoxin] + 2 NH4(+) + 16 ADP + 16 phosphate + 6 H(+). The key enzymatic reactions in nitrogen fixation are catalyzed by the nitrogenase complex, which has 2 components: the iron protein and the molybdenum-iron protein. This Prosthecochloris aestuarii (strain DSM 271 / SK 413) protein is Nitrogenase iron protein.